Reading from the N-terminus, the 74-residue chain is Large ribosomal subunit protein bL31 (74 aa).

It belongs to the bacterial ribosomal protein bL31 family. Type A subfamily. In terms of assembly, part of the 50S ribosomal subunit.

Functionally, binds the 23S rRNA. The protein is Large ribosomal subunit protein bL31 of Xanthobacter autotrophicus (strain ATCC BAA-1158 / Py2).